Here is a 272-residue protein sequence, read N- to C-terminus: Hydroxyethylthiazole kinase (272 aa).

Met-46 is a binding site for substrate. Residues Arg-122 and Thr-168 each coordinate ATP. Residue Gly-195 coordinates substrate.

It belongs to the Thz kinase family. Requires Mg(2+) as cofactor.

It catalyses the reaction 5-(2-hydroxyethyl)-4-methylthiazole + ATP = 4-methyl-5-(2-phosphooxyethyl)-thiazole + ADP + H(+). Its pathway is cofactor biosynthesis; thiamine diphosphate biosynthesis; 4-methyl-5-(2-phosphoethyl)-thiazole from 5-(2-hydroxyethyl)-4-methylthiazole: step 1/1. Its function is as follows. Catalyzes the phosphorylation of the hydroxyl group of 4-methyl-5-beta-hydroxyethylthiazole (THZ). This Alkaliphilus metalliredigens (strain QYMF) protein is Hydroxyethylthiazole kinase.